We begin with the raw amino-acid sequence, 419 residues long: MKFTELTVTEFDNFVQNPSLESHYFQVKENIVTRENDGFEVVLLGIKDDNNKVIAASLFSKIPTMGSYVYYSNRGPVMDFSDLGLVDYYLKELDKYLQQHQCLYVKLDPYWLYHLYDKDIVPFEGREKNDALVNLFKSHGYEHHGFTTEYDTSSQVRWMGVLNLEGKTPETLKKTFDSQRKRNINKAINYGVKVRFLERDEFNLFLDLYRETEERAGFVSKTDDYFYNFIDTYGDKVLVPLAYIDLDEYVLKLQQELNDKENRRDQMMAKENKSDKQMKKIAELDKQIDHDQHELLNASELSKTDGPILNLASGVYFANAYEVNYFSGGSSEKYNQFMGPYMMHWFMINYCFDNGYDRYNFYGLSGDFTENSEDYGVYRFKRGFNVQIEELIGDFYKPIHKVKYWLFTTLDKLRKKLKK.

Belongs to the FemABX family. As to quaternary structure, homodimer. Interacts with FemA.

The protein localises to the cytoplasm. It carries out the reaction MurNAc-L-Ala-D-isoglutaminyl-L-Lys-(N(6)-tri-Gly)-D-Ala-D-Ala-diphospho-di-trans,octa-cis-undecaprenyl-GlcNAc + 2 glycyl-tRNA(Gly) = MurNAc-L-Ala-D-isoglutaminyl-L-Lys-(N(6)-penta-Gly)-D-Ala-D-Ala-diphospho-di-trans,octa-cis-undecaprenyl-GlcNAc + 2 tRNA(Gly) + 2 H(+). Catalyzes the formation of the pentaglycine interpeptide bridge, which is characteristic of the S.aureus peptidoglycan. Adds glycines 4 and 5 of the pentaglycine bridge, using glycyl-tRNA(Gly) as donor. Involved in resistance to methicillin. In Staphylococcus aureus (strain NCTC 8325 / PS 47), this protein is Aminoacyltransferase FemB (femB).